A 423-amino-acid polypeptide reads, in one-letter code: MITLRKLPIALAVAAGVLSTQAMAVDFHGYARSGIGWTASGGEQQCFQTTGAQSKYRLGNECETYAELKLGQELWKEGDKSFYLDTNVAYSVSQRDDWESTDPAFREANVQGKNLIESLPGSTIWAGKRFYQRHDVHMIDFYYWDISGPGAGLETIDLGFGKLSVAATRNSESGGSSAWIDNQRENAKYTINNVYDVRLAGLETNPGGSLELGVDYGRADTQEGYSLAPNASKDGVMLTAEHTQSLMGGFNKFVVQYATDSMTSYNTGHSQGTSVNNNGHLLRVIDHGAINLAEKWDMMYVALYQDIDLDNNNGNTWYSVGVRPMYKWTPIMSTLLEAGYDNVKSQHTGERNGQYKLTLAQQWQAGDSIWSRPAIRVFATYANWDEKWGYSDTTGVAQDGTIGTNSRGKNNEVTFGAQFEAWW.

The N-terminal stretch at 1 to 24 (MITLRKLPIALAVAAGVLSTQAMA) is a signal peptide.

The protein belongs to the porin LamB (TC 1.B.3) family. Homotrimer formed of three 18-stranded antiparallel beta-barrels, containing three independent channels.

Its subcellular location is the cell outer membrane. The enzyme catalyses beta-maltose(in) = beta-maltose(out). In terms of biological role, involved in the transport of maltose and maltodextrins. This Yersinia pestis bv. Antiqua (strain Antiqua) protein is Maltoporin 1.